Reading from the N-terminus, the 120-residue chain is Large ribosomal subunit protein bL19c (120 aa).

It belongs to the bacterial ribosomal protein bL19 family.

It is found in the plastid. The protein resides in the chloroplast. The protein is Large ribosomal subunit protein bL19c of Thalassiosira weissflogii (Marine diatom).